The following is an 831-amino-acid chain: DNA ligase (831 aa).

Residues 34–38 (DADYD), 83–84 (SL), and Glu-114 each bind NAD(+). Lys-116 acts as the N6-AMP-lysine intermediate in catalysis. Residues Arg-137, Glu-174, Lys-291, and Lys-315 each contribute to the NAD(+) site. Zn(2+) is bound by residues Cys-409, Cys-412, Cys-427, and Cys-433. Positions 749-831 (AHTAPLNGQS…LDFLEQYSAQ (83 aa)) constitute a BRCT domain.

Belongs to the NAD-dependent DNA ligase family. LigA subfamily. Mg(2+) serves as cofactor. It depends on Mn(2+) as a cofactor.

The catalysed reaction is NAD(+) + (deoxyribonucleotide)n-3'-hydroxyl + 5'-phospho-(deoxyribonucleotide)m = (deoxyribonucleotide)n+m + AMP + beta-nicotinamide D-nucleotide.. DNA ligase that catalyzes the formation of phosphodiester linkages between 5'-phosphoryl and 3'-hydroxyl groups in double-stranded DNA using NAD as a coenzyme and as the energy source for the reaction. It is essential for DNA replication and repair of damaged DNA. This Xylella fastidiosa (strain M12) protein is DNA ligase.